A 428-amino-acid chain; its full sequence is Histidine--tRNA ligase (428 aa).

It belongs to the class-II aminoacyl-tRNA synthetase family. Homodimer.

Its subcellular location is the cytoplasm. It catalyses the reaction tRNA(His) + L-histidine + ATP = L-histidyl-tRNA(His) + AMP + diphosphate + H(+). This chain is Histidine--tRNA ligase, found in Bordetella avium (strain 197N).